A 198-amino-acid chain; its full sequence is Recombination protein RecR (198 aa).

The C4-type zinc finger occupies Cys-57–Cys-72. A Toprim domain is found at Glu-80–Ala-175.

It belongs to the RecR family.

May play a role in DNA repair. It seems to be involved in an RecBC-independent recombinational process of DNA repair. It may act with RecF and RecO. The sequence is that of Recombination protein RecR from Streptococcus equi subsp. zooepidemicus (strain MGCS10565).